A 69-amino-acid chain; its full sequence is Cytoinsectotoxin-2a (69 aa).

Belongs to the cationic peptide 06 (cytoinsectotoxin) family. As to expression, expressed by the venom gland.

The protein resides in the secreted. Its function is as follows. Insecticidal and antimicrobial peptide. Has insecticidal activity against larvae of flesh fly S.carnaria. Has antibacterial activity against Gram-positive bacterium B.subtilis B-501 (MIC=1.25 uM) and Gram-negative bacterium E.coli DH5alpha (MIC=2.5 uM). The sequence is that of Cytoinsectotoxin-2a from Lachesana tarabaevi (Spider).